Here is a 370-residue protein sequence, read N- to C-terminus: Cytochrome b (370 aa).

The next 4 helical transmembrane spans lie at 25–45, 69–90, 105–125, and 170–190; these read FGSMLLACLTLQLLTGFFLAV, WMMQNLHAIGASMFFICIYIHI, WFSGTTLLIMLMATAFFGYVL, and FFALHFILPFGIISLSSLHIL. The heme b site is built by His-75 and His-89. The heme b site is built by His-174 and His-188. An a ubiquinone-binding site is contributed by His-193. The next 4 helical transmembrane spans lie at 218 to 238, 280 to 300, 312 to 332, and 339 to 358; these read YKDMLMLTIMTIMLLTIVSFF, LGGALALTMSIMMLLTLPFTH, FMQLTFWTFTATFLVISWTAT, and FTTISQVAALMYFLFFISNP.

The protein belongs to the cytochrome b family. The cytochrome bc1 complex contains 3 respiratory subunits (MT-CYB, CYC1 and UQCRFS1), 2 core proteins (UQCRC1 and UQCRC2) and probably 6 low-molecular weight proteins. The cofactor is heme b.

It localises to the mitochondrion inner membrane. In terms of biological role, component of the ubiquinol-cytochrome c reductase complex (complex III or cytochrome b-c1 complex) that is part of the mitochondrial respiratory chain. The b-c1 complex mediates electron transfer from ubiquinol to cytochrome c. Contributes to the generation of a proton gradient across the mitochondrial membrane that is then used for ATP synthesis. In Chilabothrus strigilatus mccraniei (Ragged Island boa constrictor), this protein is Cytochrome b (MT-CYB).